A 45-amino-acid polypeptide reads, in one-letter code: Photosystem II reaction center protein K (45 aa).

The propeptide occupies 1 to 8 (MEAALLLA). The helical transmembrane segment at 24–44 (LPIIPLFFLALAFVWQAAVGF) threads the bilayer.

Belongs to the PsbK family. PSII is composed of 1 copy each of membrane proteins PsbA, PsbB, PsbC, PsbD, PsbE, PsbF, PsbH, PsbI, PsbJ, PsbK, PsbL, PsbM, PsbT, PsbX, PsbY, PsbZ, Psb30/Ycf12, peripheral proteins PsbO, CyanoQ (PsbQ), PsbU, PsbV and a large number of cofactors. It forms dimeric complexes.

It localises to the cellular thylakoid membrane. Functionally, one of the components of the core complex of photosystem II (PSII). PSII is a light-driven water:plastoquinone oxidoreductase that uses light energy to abstract electrons from H(2)O, generating O(2) and a proton gradient subsequently used for ATP formation. It consists of a core antenna complex that captures photons, and an electron transfer chain that converts photonic excitation into a charge separation. The chain is Photosystem II reaction center protein K from Rippkaea orientalis (strain PCC 8801 / RF-1) (Cyanothece sp. (strain PCC 8801)).